Here is a 283-residue protein sequence, read N- to C-terminus: Pantothenate synthetase (283 aa).

30–37 (MGYLHDGH) lines the ATP pocket. Catalysis depends on histidine 37, which acts as the Proton donor. Glutamine 61 lines the (R)-pantoate pocket. A beta-alanine-binding site is contributed by glutamine 61. 147–150 (GKKD) is a binding site for ATP. Glutamine 153 provides a ligand contact to (R)-pantoate. ATP-binding positions include isoleucine 176 and 184-187 (MSSR).

The protein belongs to the pantothenate synthetase family. In terms of assembly, homodimer.

It localises to the cytoplasm. The enzyme catalyses (R)-pantoate + beta-alanine + ATP = (R)-pantothenate + AMP + diphosphate + H(+). It participates in cofactor biosynthesis; (R)-pantothenate biosynthesis; (R)-pantothenate from (R)-pantoate and beta-alanine: step 1/1. In terms of biological role, catalyzes the condensation of pantoate with beta-alanine in an ATP-dependent reaction via a pantoyl-adenylate intermediate. The polypeptide is Pantothenate synthetase (Geobacter sulfurreducens (strain ATCC 51573 / DSM 12127 / PCA)).